Reading from the N-terminus, the 210-residue chain is Endonuclease III (210 aa).

Positions 108–127 constitute a HhH domain; sequence RIELESLPGVGRKTANIILN. [4Fe-4S] cluster is bound by residues Cys187, Cys194, Cys197, and Cys203.

It belongs to the Nth/MutY family. It depends on [4Fe-4S] cluster as a cofactor.

The enzyme catalyses 2'-deoxyribonucleotide-(2'-deoxyribose 5'-phosphate)-2'-deoxyribonucleotide-DNA = a 3'-end 2'-deoxyribonucleotide-(2,3-dehydro-2,3-deoxyribose 5'-phosphate)-DNA + a 5'-end 5'-phospho-2'-deoxyribonucleoside-DNA + H(+). Its function is as follows. DNA repair enzyme that has both DNA N-glycosylase activity and AP-lyase activity. The DNA N-glycosylase activity releases various damaged pyrimidines from DNA by cleaving the N-glycosidic bond, leaving an AP (apurinic/apyrimidinic) site. The AP-lyase activity cleaves the phosphodiester bond 3' to the AP site by a beta-elimination, leaving a 3'-terminal unsaturated sugar and a product with a terminal 5'-phosphate. The polypeptide is Endonuclease III (Buchnera aphidicola subsp. Acyrthosiphon pisum (strain APS) (Acyrthosiphon pisum symbiotic bacterium)).